A 50-amino-acid polypeptide reads, in one-letter code: Sperm protamine P1 (50 aa).

This sequence belongs to the protamine P1 family. As to expression, testis.

Its subcellular location is the nucleus. The protein resides in the chromosome. Its function is as follows. Protamines substitute for histones in the chromatin of sperm during the haploid phase of spermatogenesis. They compact sperm DNA into a highly condensed, stable and inactive complex. This Trachypithecus vetulus (Purple-faced langur) protein is Sperm protamine P1 (PRM1).